Consider the following 236-residue polypeptide: uncharacterized protein (236 aa).

This is an uncharacterized protein from Sus scrofa (Pig).